The primary structure comprises 358 residues: Photosystem II protein D1 (358 aa).

Transmembrane regions (helical) follow at residues 28–45 (YVGW…AAAI), 117–132 (HFLI…QWEL), and 141–155 (WICV…AAFA). Histidine 117 is a binding site for chlorophyll a. Tryptophan 125 serves as a coordination point for pheophytin a. Positions 169 and 188 each coordinate [CaMn4O5] cluster. A helical transmembrane segment spans residues 196-217 (FHMIGVAGMFGGSLFSAMHGSL). Chlorophyll a is bound at residue histidine 197. Residues histidine 214 and 263–264 (SF) contribute to the a quinone site. Histidine 214 is a binding site for Fe cation. Histidine 271 provides a ligand contact to Fe cation. A helical transmembrane segment spans residues 273–287 (FLAAWPVICIWITSL). [CaMn4O5] cluster is bound by residues histidine 331, glutamate 332, aspartate 341, and alanine 343. The propeptide occupies 344–358 (AAESTPVALIAPAIG).

It belongs to the reaction center PufL/M/PsbA/D family. In terms of assembly, PSII is composed of 1 copy each of membrane proteins PsbA, PsbB, PsbC, PsbD, PsbE, PsbF, PsbH, PsbI, PsbJ, PsbK, PsbL, PsbM, PsbT, PsbX, PsbY, Psb30/Ycf12, peripheral proteins PsbO, CyanoQ (PsbQ), PsbU, PsbV and a large number of cofactors. It forms dimeric complexes. The D1/D2 heterodimer binds P680, chlorophylls that are the primary electron donor of PSII, and subsequent electron acceptors. It shares a non-heme iron and each subunit binds pheophytin, quinone, additional chlorophylls, carotenoids and lipids. D1 provides most of the ligands for the Mn4-Ca-O5 cluster of the oxygen-evolving complex (OEC). There is also a Cl(-1) ion associated with D1 and D2, which is required for oxygen evolution. The PSII complex binds additional chlorophylls, carotenoids and specific lipids. is required as a cofactor. Tyr-160 forms a radical intermediate that is referred to as redox-active TyrZ, YZ or Y-Z. Post-translationally, C-terminally processed by CtpA; processing is essential to allow assembly of the oxygen-evolving complex and thus photosynthetic growth.

Its subcellular location is the cellular thylakoid membrane. It catalyses the reaction 2 a plastoquinone + 4 hnu + 2 H2O = 2 a plastoquinol + O2. Functionally, photosystem II (PSII) is a light-driven water:plastoquinone oxidoreductase that uses light energy to abstract electrons from H(2)O, generating O(2) and a proton gradient subsequently used for ATP formation. It consists of a core antenna complex that captures photons, and an electron transfer chain that converts photonic excitation into a charge separation. The D1/D2 (PsbA/PsbD) reaction center heterodimer binds P680, the primary electron donor of PSII as well as several subsequent electron acceptors. The polypeptide is Photosystem II protein D1 (Prochlorococcus marinus (strain MIT 9313)).